The primary structure comprises 413 residues: Multidrug resistance protein MdtA (413 aa).

The first 20 residues, 1-20 (MKGSNTFRWAIAIGVVVAAA), serve as a signal peptide directing secretion. Disordered stretches follow at residues 31–57 (SPTA…RDGP) and 392–413 (PQTT…GARA). Residues 397 to 413 (ADEKSPSRHEGQKGARA) show a composition bias toward basic and acidic residues.

Belongs to the membrane fusion protein (MFP) (TC 8.A.1) family. In terms of assembly, part of a tripartite efflux system composed of MdtA, MdtB and MdtC.

It is found in the cell inner membrane. This chain is Multidrug resistance protein MdtA, found in Salmonella heidelberg (strain SL476).